The chain runs to 242 residues: Phosphoribosylaminoimidazole-succinocarboxamide synthase (242 aa).

This sequence belongs to the SAICAR synthetase family.

It carries out the reaction 5-amino-1-(5-phospho-D-ribosyl)imidazole-4-carboxylate + L-aspartate + ATP = (2S)-2-[5-amino-1-(5-phospho-beta-D-ribosyl)imidazole-4-carboxamido]succinate + ADP + phosphate + 2 H(+). The protein operates within purine metabolism; IMP biosynthesis via de novo pathway; 5-amino-1-(5-phospho-D-ribosyl)imidazole-4-carboxamide from 5-amino-1-(5-phospho-D-ribosyl)imidazole-4-carboxylate: step 1/2. The sequence is that of Phosphoribosylaminoimidazole-succinocarboxamide synthase from Prochlorococcus marinus subsp. pastoris (strain CCMP1986 / NIES-2087 / MED4).